Reading from the N-terminus, the 1606-residue chain is MANADVLKVSILGKESIHCGFHLIPYIAQTVLSNLPSSTYVLVTDTNVANFHLTAFEKEFEQRISSLPTSSTKPRFLSLVIPPGETSKSREGKANIEDFLLLHRCTRDSVILALGGGVIGDLVGFVAATFMRGVRFVQIPTTLLAMVDSSVGGKTAIDTPHGKNLIGAFWQPEYIFIDAAFLETLPSREFSNGMAEVVKTAAIWNEAEFISLESRSADIFAAIQTPSADYAGRSKQTRSIAQELLLSVIVGSISVKAHIVTIDERETGLRNLVNFGHTIGHAIEAVLTPTILHGECVSVGMILEGEISRQMGILSQVGVGRLNRCLKAYNLPVTLADPRIASLPAAKLLTVERLLDIMRIDKKNSGPEKKIVILSRIGATYEPKATVVPDSIIAKTLSEAAKVIPGVPRHHPVKMATPGSKSISNRALVLAALGKGTCRLKNLLHSDDTQVMMAALNELKGASFAWEDAGETLVVKGGEGSLSVPPKGKELYLGNAGTAARFLTTVCTLVQSSPQDNAEYTVITGNARMKQRPIGPLVTALQANGSKIDFLESEGCLPLAIAPQGLKGSQLQLAASVSSQYVSSILLCAPYAEEPITLELIGGQVISQPYIDMTVAMMKTFGVDVVRRKDPVTGKFLDVYEIPKAVYTNPPEYNIESDASSATYPLAIAAVTGTSCTIQNIGSASLQGDAKFAKEVLEKMGCQVSQTATETTVQGPPIGQLKAIEEVDMEVMTDAFLTATALAAVANGKTRIIGIANQRVKECNRIRAMIDELAKFGVETIELDDGLEIIGKPISDLKRGVSVHCYDDHRVAMAFSVLSTVVEGTIIEEKRCVEKTWPNWWDDLENKIGLTVQGVDLASVASEASASGTINHDSAASIILIGMRGTGKTFVGNLAAATLSWTCLDADAYFETKHEMGVREFVHQKGWQAFRDAEFEVLRELIAEKSQGHVISLGGGIVETPAARELLKEYAATKGPVVHIVRPIDEVIRYLNSEASRPAYDEAIVDVFRRREPWFGECCSHDFFNRFGDLPYSSPKATSREIARFFNHITGQRPNLAQNLTSGRRSYFLCLTYPDVTQSFPVIHELTQGVDAIELRVDLLRASKDYDSIEYSIPTLAYVSSQVAALRRVTSLPIVFTVRTQSQGGSFPDAAEKEAVELLKLALRLGVEYVDVEISLSEKKIKELVSLKGSSHMIASWHDWSGNMIWDGPVVKEKYDAAARFGDIIKIVGKANSIQDNFTLYNFVSKVNSTAGSKPFIAINMGLEGQMSRVLNSTLSPVSHPLLPSKAAPGQLSFKQIQNALHLLGLLPAQRFYLFGTPIAHSMSPTLHNTGFEILGLPHHYELLETKEVAEEIKIAIGDSAFGGASVTIPYKLDVIPLLDKLSPAAEAIGAVNTIIPRTTGSGRMLVGDNTDWLGIKACITEQLSSKPIHAALVIGAGGTARAAIYALSALNVGDIYLYNRTTSKAYELAHAFPHAPVHVLEQLGQWPNGAVPPCVIVSTVPASATTTEEETSGILLPSKLFDYRDGPAVVIDMAYKPAETPLLRLAKTAGDNWATVPGLEVLLEQGYVQFEMWTGRRCPKELVAKWLGRLTTDHKQFVFEEECES.

Positions 1 to 390 (MANADVLKVS…YEPKATVVPD (390 aa)) are 3-dehydroquinate synthase. NAD(+) contacts are provided by residues 45–47 (DTN), 85–88 (ETSK), 116–118 (GGV), and D121. Residue R132 coordinates 7-phospho-2-dehydro-3-deoxy-D-arabino-heptonate. 141-142 (TT) is an NAD(+) binding site. D148 and K154 together coordinate 7-phospho-2-dehydro-3-deoxy-D-arabino-heptonate. K163 contacts NAD(+). N164 contacts 7-phospho-2-dehydro-3-deoxy-D-arabino-heptonate. NAD(+) contacts are provided by residues 181–184 (FLET) and N192. E196 is a Zn(2+) binding site. 7-phospho-2-dehydro-3-deoxy-D-arabino-heptonate-binding positions include 196–199 (EVVK) and K256. E266 (proton acceptor; for 3-dehydroquinate synthase activity) is an active-site residue. 7-phospho-2-dehydro-3-deoxy-D-arabino-heptonate is bound by residues 270-274 (RNLVN) and H277. H277 contacts Zn(2+). Catalysis depends on H281, which acts as the Proton acceptor; for 3-dehydroquinate synthase activity. H293 and K362 together coordinate 7-phospho-2-dehydro-3-deoxy-D-arabino-heptonate. H293 contacts Zn(2+). The EPSP synthase stretch occupies residues 403 to 850 (VIPGVPRHHP…WDDLENKIGL (448 aa)). Catalysis depends on C832, which acts as the For EPSP synthase activity. A shikimate kinase region spans residues 875–1070 (AASIILIGMR…TSGRRSYFLC (196 aa)). 882 to 889 (GMRGTGKT) is a binding site for ATP. Positions 1071 to 1296 (LTYPDVTQSF…AAPGQLSFKQ (226 aa)) are 3-dehydroquinase. Residue H1198 is the Proton acceptor; for 3-dehydroquinate dehydratase activity of the active site. K1226 acts as the Schiff-base intermediate with substrate; for 3-dehydroquinate dehydratase activity in catalysis. The segment at 1309 to 1606 (AQRFYLFGTP…QFVFEEECES (298 aa)) is shikimate dehydrogenase.

The protein in the N-terminal section; belongs to the sugar phosphate cyclases superfamily. Dehydroquinate synthase family. It in the 2nd section; belongs to the EPSP synthase family. This sequence in the 3rd section; belongs to the shikimate kinase family. In the 4th section; belongs to the type-I 3-dehydroquinase family. The protein in the C-terminal section; belongs to the shikimate dehydrogenase family. In terms of assembly, homodimer. Requires Zn(2+) as cofactor.

The protein localises to the cytoplasm. The enzyme catalyses 7-phospho-2-dehydro-3-deoxy-D-arabino-heptonate = 3-dehydroquinate + phosphate. It catalyses the reaction 3-dehydroquinate = 3-dehydroshikimate + H2O. The catalysed reaction is shikimate + NADP(+) = 3-dehydroshikimate + NADPH + H(+). It carries out the reaction shikimate + ATP = 3-phosphoshikimate + ADP + H(+). The enzyme catalyses 3-phosphoshikimate + phosphoenolpyruvate = 5-O-(1-carboxyvinyl)-3-phosphoshikimate + phosphate. It participates in metabolic intermediate biosynthesis; chorismate biosynthesis; chorismate from D-erythrose 4-phosphate and phosphoenolpyruvate: step 2/7. The protein operates within metabolic intermediate biosynthesis; chorismate biosynthesis; chorismate from D-erythrose 4-phosphate and phosphoenolpyruvate: step 3/7. It functions in the pathway metabolic intermediate biosynthesis; chorismate biosynthesis; chorismate from D-erythrose 4-phosphate and phosphoenolpyruvate: step 4/7. Its pathway is metabolic intermediate biosynthesis; chorismate biosynthesis; chorismate from D-erythrose 4-phosphate and phosphoenolpyruvate: step 5/7. It participates in metabolic intermediate biosynthesis; chorismate biosynthesis; chorismate from D-erythrose 4-phosphate and phosphoenolpyruvate: step 6/7. Its function is as follows. The AROM polypeptide catalyzes 5 consecutive enzymatic reactions in prechorismate polyaromatic amino acid biosynthesis. The polypeptide is Pentafunctional AROM polypeptide (Laccaria bicolor (strain S238N-H82 / ATCC MYA-4686) (Bicoloured deceiver)).